The chain runs to 547 residues: Auxin transporter-like protein 3 (547 aa).

The Cytoplasmic portion of the chain corresponds to 1-74; it reads MASGSSGGGY…DAWFSCASNQ (74 aa). The helical transmembrane segment at 75–92 threads the bilayer; that stretch reads VAQVLLTLPYSFAQLGMA. At 93-94 the chain is on the extracellular side; that stretch reads SG. Residues 95 to 115 form a helical membrane-spanning segment; that stretch reads LLFQLFYGLLGSWTAYLISIL. At 116–151 the chain is on the cytoplasmic side; that stretch reads YLEYRTRKERDKVDFRNHVIQWFEVLDGLLGRHWRN. The helical transmembrane segment at 152–172 threads the bilayer; sequence VGLAFNCTFLLFGSVIQLIGC. Residues 173–187 are Extracellular-facing; sequence ASNIYYINDHLDKRT. A helical transmembrane segment spans residues 188-208; it reads WTYIFGACCATTVFIPSFHNY. The Cytoplasmic portion of the chain corresponds to 209 to 211; it reads RIW. A helical membrane pass occupies residues 212 to 232; sequence SFLGLLMTTYTAWYIAVASLI. At 233-247 the chain is on the extracellular side; that stretch reads HGQVEGVAHSGPTSI. A helical membrane pass occupies residues 248 to 268; that stretch reads VLYFTGATNILYTFGGHAVTV. Topologically, residues 269 to 281 are cytoplasmic; it reads EIMHAMWRPQKFK. Residues 282–302 traverse the membrane as a helical segment; that stretch reads AIYLLATVYVLTLTLPSASAA. Over 303–329 the chain is Extracellular; the sequence is YWAFGDALLTHSNALALLPRTPWRDAA. Residues 330–350 traverse the membrane as a helical segment; that stretch reads VVLMLIHQFITFGFACTPLYF. The Cytoplasmic portion of the chain corresponds to 351 to 371; it reads VWEKLVGLHGCPSLCKRAAAR. Residues 372–392 traverse the membrane as a helical segment; sequence LPVVLPIWFLAIIFPFFGPIN. S393 is a topological domain (extracellular). The chain crosses the membrane as a helical span at residues 394–414; it reads AVGSLLVSFTVYIIPSLAYMV. At 415–440 the chain is on the cytoplasmic side; it reads TFRSPQSRQNAVERPPRFAGGWTGAY. The helical transmembrane segment at 441 to 461 threads the bilayer; it reads VINSFVVAWVLVVGFGFGGWA. The Extracellular segment spans residues 462–547; sequence SITNFVHQVD…HHHRHHRHGL (86 aa). The N-linked (GlcNAc...) asparagine glycan is linked to N509.

It belongs to the amino acid/polyamine transporter 2 family. Amino acid/auxin permease (AAAP) (TC 2.A.18.1) subfamily.

It localises to the cell membrane. Carrier protein involved in proton-driven auxin influx. May mediate the formation of auxin gradient from developing leaves (site of auxin biosynthesis) to tips. The sequence is that of Auxin transporter-like protein 3 from Oryza sativa subsp. japonica (Rice).